An 85-amino-acid polypeptide reads, in one-letter code: Large ribosomal subunit protein bL27 (85 aa).

A disordered region spans residues 1 to 22; sequence MAHKKAGGSSRNGRDSESKRLG.

Belongs to the bacterial ribosomal protein bL27 family.

The chain is Large ribosomal subunit protein bL27 from Tolumonas auensis (strain DSM 9187 / NBRC 110442 / TA 4).